The sequence spans 512 residues: Bestrophin-2 (512 aa).

The Cytoplasmic portion of the chain corresponds to 1-31 (MTVTYTARVAKARFGGFSKLLLLWRGSIYKL). Alanine 10 lines the Ca(2+) pocket. Residues 32–51 (LWRELLCFLGLFMALSAAYR) traverse the membrane as a helical segment. The Extracellular segment spans residues 52–60 (FVLTEEQKR). Residues 61 to 82 (YFEKLVLYCDRYASLIPVSFVL) form a helical membrane-spanning segment. Topologically, residues 83–238 (GFYVTLVVHR…WISVPLVYTQ (156 aa)) are cytoplasmic. Residues 239–255 (VVTIAVYSYFLACLIGR) form a helical membrane-spanning segment. Residues 256–274 (QFLDPAQGYKDHDLDLCVP) are Extracellular-facing. The helical transmembrane segment at 275-288 (IFTLLQFFFYAGWL) threads the bilayer. The Cytoplasmic segment spans residues 289–512 (KVAEQLINPF…PIGEEEESLA (224 aa)). Residues glutamine 293, asparagine 296, aspartate 301, and aspartate 304 each contribute to the Ca(2+) site. The disordered stretch occupies residues 453–512 (VDLGQPEPESEPITGPESPALVPAPRAPSEPLTVVPLSGTRGPAPPWLPSPIGEEEESLA).

Belongs to the anion channel-forming bestrophin (TC 1.A.46) family. Calcium-sensitive chloride channel subfamily. As to quaternary structure, pentamer. Interacts with GLUL; this interaction tethers a fraction of GLUL to the membrane, causing a decrease of cytosolic glutamine synthase (GS) activity and inhibits the chloride channel activity of BEST2 by affecting the gating at the aperture in the absence of intracellular glutamate.

It localises to the cell membrane. The protein resides in the basolateral cell membrane. It carries out the reaction chloride(in) = chloride(out). The enzyme catalyses iodide(out) = iodide(in). It catalyses the reaction hydrogencarbonate(in) = hydrogencarbonate(out). The catalysed reaction is L-glutamate(out) = L-glutamate(in). It carries out the reaction L-glutamine(out) = L-glutamine(in). Chloride channel activity is allosterically inhibited by GLUL/glutamine synthase (GS) which affects the gating at the aperture in the absence of intracellular glutamate. Inhibitory effect of GLUL is relieved upon increasing of intracellular level of L-glutamate. Functionally, ligand-gated anion channel that allows the movement of anions across cell membranes when activated by calcium (Ca2+). Transports a large specter of anions, namely mediates the movement of chloride, L-glutamate and iodide. Calcium-binding triggers the dilation of the aperture, but calcium-dependent gating is only effective when the size of the passing anion is bigger than the closed aperture. Mediates the calcium-activated hydrogencarbonate movement and participates in colonic hydrogencarbonate secretion concomitant with mucin secretion. In non-pigmented epithelium (NPE), mediates the efflux of intracellular L-glutamate; binding of intracellular L-glutamate activates and open both the neck and the aperture of the channel, leading to L-glutamate exit promoting chloride influx movement from the extracellular side in trans. Also exhibits a directional permeability for intracellular glutamine, in a similar manner as for L-glutamate. In Bos taurus (Bovine), this protein is Bestrophin-2.